Here is a 223-residue protein sequence, read N- to C-terminus: Flagellar L-ring protein (223 aa).

The N-terminal stretch at 1-18 is a signal peptide; that stretch reads MKKSLMALIVVGSFLLSA. Cys-19 carries the N-palmitoyl cysteine lipid modification. The S-diacylglycerol cysteine moiety is linked to residue Cys-19.

It belongs to the FlgH family. In terms of assembly, the basal body constitutes a major portion of the flagellar organelle and consists of four rings (L,P,S, and M) mounted on a central rod.

It localises to the cell outer membrane. The protein resides in the bacterial flagellum basal body. In terms of biological role, assembles around the rod to form the L-ring and probably protects the motor/basal body from shearing forces during rotation. The chain is Flagellar L-ring protein from Herminiimonas arsenicoxydans.